A 244-amino-acid polypeptide reads, in one-letter code: tRNA pseudouridine synthase A (244 aa).

Aspartate 52 acts as the Nucleophile in catalysis. Tyrosine 110 is a substrate binding site.

The protein belongs to the tRNA pseudouridine synthase TruA family. Homodimer.

It catalyses the reaction uridine(38/39/40) in tRNA = pseudouridine(38/39/40) in tRNA. Functionally, formation of pseudouridine at positions 38, 39 and 40 in the anticodon stem and loop of transfer RNAs. In Thermoanaerobacter pseudethanolicus (strain ATCC 33223 / 39E) (Clostridium thermohydrosulfuricum), this protein is tRNA pseudouridine synthase A.